A 603-amino-acid polypeptide reads, in one-letter code: Probable GMP synthase [glutamine-hydrolyzing] (603 aa).

One can recognise a Glutamine amidotransferase type-1 domain in the interval 6 to 195; it reads KIAVVDFGGQ…FIQICGVSKT (190 aa). Cys-81 acts as the Nucleophile in catalysis. Catalysis depends on residues His-170 and Glu-172. The 197-residue stretch at 196–392 folds into the GMPS ATP-PPase domain; that stretch reads WGIDQFLKEK…LGLESEWVGR (197 aa). 224 to 230 is a binding site for ATP; sequence SGGVDST.

Homodimer.

The enzyme catalyses XMP + L-glutamine + ATP + H2O = GMP + L-glutamate + AMP + diphosphate + 2 H(+). It functions in the pathway purine metabolism; GMP biosynthesis; GMP from XMP (L-Gln route): step 1/1. In terms of biological role, catalyzes the synthesis of GMP from XMP. The protein is Probable GMP synthase [glutamine-hydrolyzing] (guaA) of Leptospira interrogans serogroup Icterohaemorrhagiae serovar copenhageni (strain Fiocruz L1-130).